Reading from the N-terminus, the 235-residue chain is Small ribosomal subunit protein uS3 (235 aa).

Residues Val-39 to Arg-107 form the KH type-2 domain.

The protein belongs to the universal ribosomal protein uS3 family. As to quaternary structure, part of the 30S ribosomal subunit. Forms a tight complex with proteins S10 and S14.

Binds the lower part of the 30S subunit head. Binds mRNA in the 70S ribosome, positioning it for translation. This chain is Small ribosomal subunit protein uS3, found in Buchnera aphidicola subsp. Baizongia pistaciae (strain Bp).